The primary structure comprises 250 residues: Eukaryotic translation initiation factor 2 subunit 2 (250 aa).

The C4-type zinc-finger motif lies at 193 to 217 (CHTCKSPETQLTKDTRLFFLQCTNC).

This sequence belongs to the eIF-2-beta/eIF-5 family. Eukaryotic translation initiation factor 2 eIF2 is a heterotrimeric complex composed of an alpha, a beta and a gamma subunit.

The protein resides in the cytoplasm. The protein localises to the cytosol. Its function is as follows. Component of the eIF2 complex that functions in the early steps of protein synthesis by forming a ternary complex with GTP and initiator tRNA. This complex binds to a 40S ribosomal subunit, followed by mRNA binding to form a 43S pre-initiation complex (43S PIC). Junction of the 60S ribosomal subunit to form the 80S initiation complex is preceded by hydrolysis of the GTP bound to eIF2 and release of an eIF2-GDP binary complex. In order for eIF2 to recycle and catalyze another round of initiation, the GDP bound to eIF2 must exchange with GTP by way of a reaction catalyzed by eIF2B. The polypeptide is Eukaryotic translation initiation factor 2 subunit 2 (Caenorhabditis elegans).